The following is a 118-amino-acid chain: Small ribosomal subunit protein uS13 (118 aa).

The tract at residues 93 to 118 (KGLPVRGQRTKTNARTRKGPRKPIRK) is disordered.

This sequence belongs to the universal ribosomal protein uS13 family. As to quaternary structure, part of the 30S ribosomal subunit. Forms a loose heterodimer with protein S19. Forms two bridges to the 50S subunit in the 70S ribosome.

In terms of biological role, located at the top of the head of the 30S subunit, it contacts several helices of the 16S rRNA. In the 70S ribosome it contacts the 23S rRNA (bridge B1a) and protein L5 of the 50S subunit (bridge B1b), connecting the 2 subunits; these bridges are implicated in subunit movement. Contacts the tRNAs in the A and P-sites. The polypeptide is Small ribosomal subunit protein uS13 (Ectopseudomonas mendocina (strain ymp) (Pseudomonas mendocina)).